Reading from the N-terminus, the 314-residue chain is Nodulation protein D 1 (314 aa).

An HTH lysR-type domain is found at leucine 6–threonine 63. The segment at residues leucine 23–alanine 42 is a DNA-binding region (H-T-H motif).

It belongs to the LysR transcriptional regulatory family.

Its function is as follows. NodD regulates the expression of the nodABCFE genes which encode other nodulation proteins. NodD is also a negative regulator of its own expression. Binds flavenoids as inducers. The chain is Nodulation protein D 1 (nodD1) from Mesorhizobium japonicum (strain LMG 29417 / CECT 9101 / MAFF 303099) (Mesorhizobium loti (strain MAFF 303099)).